A 138-amino-acid polypeptide reads, in one-letter code: ATP synthase epsilon chain (138 aa).

It belongs to the ATPase epsilon chain family. As to quaternary structure, F-type ATPases have 2 components, CF(1) - the catalytic core - and CF(0) - the membrane proton channel. CF(1) has five subunits: alpha(3), beta(3), gamma(1), delta(1), epsilon(1). CF(0) has three main subunits: a, b and c.

The protein resides in the cell inner membrane. In terms of biological role, produces ATP from ADP in the presence of a proton gradient across the membrane. The chain is ATP synthase epsilon chain from Verminephrobacter eiseniae (strain EF01-2).